An 890-amino-acid chain; its full sequence is MTDVTIKTLAAERQTSVERLVQQFADAGIRKSADDSVSAQEKQTLIDHLNQKNSGPDKLTLQRKTRSTLNIPGTGGKSKSVQIEVRKKRTFVKRDPQEAERLAAEEQAQREAEEQARREAEESAKREAQQKAEREAAEQAKREAAEQAKREAAEKDKVSNQQDDMTKNAQAEKARREQEAAELKRKAEEEARRKLEEEARRVAEEARRMAEENKWTDNAEPTEDSSDYHVTTSQHARQAEDESDREVEGGRGRGRNAKAARPKKGNKHSESKADREEARAAVRGGKGGKRKGSSLQQGFQKPAQAVNRDVVIGETITVGELANKMAVKGSQVIKAMMKLGAMATINQVIDQETAQLVAEEMGHKVILRRENELEEAVMSDRDTGAAAEPRAPVVTIMGHVDHGKTSLLDYIRSTKVASGEAGGITQHIGAYHVETENGMITFLDTPGHAAFTSMRARGAQATDIVVLVVAADDGVMPQTIEAIQHAKAAGVPVVVAVNKIDKPEADPDRVKNELSQYGILPEEWGGESQFVHVSAKAGTGIDELLDAILLQAEVLELKAVRKGMASGAVIESFLDKGRGPVATVLVREGTLHKGDIVLCGFEYGRVRAMRNEMGQEVLEAGPSIPVEILGLSGVPAAGDEVTVVRDEKKAREVALYRQGKFREVKLARQQKSKLENMFANMTEGEVHEVNIVLKADVQGSVEAISDSLLKLSTDEVKVKIIGSGVGGITETDATLAAASNAILVGFNVRADASARKVIEAESLDLRYYSVIYNLIDEVKAAMSGMLSPELKQQIIGLAEVRDVFKSPKFGAIAGCMVTEGVVKRHNPIRVLRDNVVIYEGELESLRRFKDDVNEVRNGMECGIGVKNYNDVRTGDVIEVFEIIEIQRTIA.

The disordered stretch occupies residues 45–304; the sequence is LIDHLNQKNS…LQQGFQKPAQ (260 aa). Over residues 67 to 81 the composition is skewed to polar residues; it reads STLNIPGTGGKSKSV. Residues 92 to 217 are compositionally biased toward basic and acidic residues; sequence VKRDPQEAER…RMAEENKWTD (126 aa). The segment covering 252–266 has biased composition (basic residues); it reads GRGRNAKAARPKKGN. Positions 267–280 are enriched in basic and acidic residues; the sequence is KHSESKADREEARA. The tr-type G domain occupies 389-558; sequence PRAPVVTIMG…LLQAEVLELK (170 aa). A G1 region spans residues 398–405; it reads GHVDHGKT. GTP is bound at residue 398–405; that stretch reads GHVDHGKT. Residues 423 to 427 form a G2 region; sequence GITQH. Positions 444 to 447 are G3; the sequence is DTPG. GTP-binding positions include 444-448 and 498-501; these read DTPGH and NKID. The segment at 498–501 is G4; that stretch reads NKID. The tract at residues 534 to 536 is G5; that stretch reads SAK. Lys808 is modified (N6-acetyllysine).

The protein belongs to the TRAFAC class translation factor GTPase superfamily. Classic translation factor GTPase family. IF-2 subfamily.

It localises to the cytoplasm. Functionally, one of the essential components for the initiation of protein synthesis. Protects formylmethionyl-tRNA from spontaneous hydrolysis and promotes its binding to the 30S ribosomal subunits. Also involved in the hydrolysis of GTP during the formation of the 70S ribosomal complex. This is Translation initiation factor IF-2 from Escherichia fergusonii (strain ATCC 35469 / DSM 13698 / CCUG 18766 / IAM 14443 / JCM 21226 / LMG 7866 / NBRC 102419 / NCTC 12128 / CDC 0568-73).